Consider the following 731-residue polypeptide: 1,4-alpha-glucan branching enzyme GlgB (731 aa).

Catalysis depends on Asp-411, which acts as the Nucleophile. Glu-464 serves as the catalytic Proton donor.

Belongs to the glycosyl hydrolase 13 family. GlgB subfamily. Monomer.

The catalysed reaction is Transfers a segment of a (1-&gt;4)-alpha-D-glucan chain to a primary hydroxy group in a similar glucan chain.. It participates in glycan biosynthesis; glycogen biosynthesis. Functionally, catalyzes the formation of the alpha-1,6-glucosidic linkages in glycogen by scission of a 1,4-alpha-linked oligosaccharide from growing alpha-1,4-glucan chains and the subsequent attachment of the oligosaccharide to the alpha-1,6 position. This is 1,4-alpha-glucan branching enzyme GlgB from Mycobacterium bovis (strain ATCC BAA-935 / AF2122/97).